We begin with the raw amino-acid sequence, 188 residues long: Early nodulin-like protein 5 (188 aa).

Positions 1-24 (MDSSKKIIIVMFLVTFYMFSCVSS) are cleaved as a signal peptide. Residues 25 to 128 (TEFEVGGENG…GQKMIVKVME (104 aa)) enclose the Phytocyanin domain. The cysteines at positions 82 and 116 are disulfide-linked. The segment at 127–157 (METESSTESPPPSSSSSSSSSSSLPASTPKA) is disordered. The span at 129–155 (TESSTESPPPSSSSSSSSSSSLPASTP) shows a compositional bias: low complexity. S170 carries the GPI-anchor amidated serine lipid modification. Positions 171 to 188 (SSGFVVSAVLIVSVFGLV) are cleaved as a propeptide — removed in mature form.

This sequence belongs to the early nodulin-like (ENODL) family. As to expression, mostly expressed in leaves and flowers, and, to a lower extent, in stems.

It localises to the cell membrane. Functionally, may act as a carbohydrate transporter. Mainly required for reproductive functions. The protein is Early nodulin-like protein 5 of Arabidopsis thaliana (Mouse-ear cress).